The chain runs to 361 residues: Serpentine receptor class epsilon-32 (361 aa).

The next 7 membrane-spanning stretches (helical) occupy residues 34–54 (IIEL…LYVM), 66–86 (ILYI…LITI), 124–144 (LLIF…YGIL), 168–188 (IPIA…LSVL), 195–215 (FLSH…YLFI), 256–276 (LVFV…ALAF), and 286–306 (FVEN…MLTI).

It belongs to the nematode receptor-like protein sre family.

It is found in the membrane. The protein is Serpentine receptor class epsilon-32 (sre-32) of Caenorhabditis elegans.